Reading from the N-terminus, the 539-residue chain is uncharacterized protein (539 aa).

The interval 316 to 433 (AEHHHQKGKK…ATVERSSPPE (118 aa)) is disordered. Residues 318–352 (HHHQKGKKVPATHRRSSTPHARKTAGTRARTRARK) show a composition bias toward basic residues. Basic and acidic residues predominate over residues 362-384 (KISKKDSGESKQKDETAGMERVF). The segment covering 390–402 (NVRTCSSRASRTG) has biased composition (polar residues).

This is an uncharacterized protein from Treponema pallidum (strain Nichols).